Reading from the N-terminus, the 321-residue chain is Mechanosensory protein 3 (321 aa).

LIM zinc-binding domains lie at 27-86 (NKCN…DHSI) and 87-152 (HRCA…QMDD). A DNA-binding region (homeobox) is located at residues 217 to 276 (RRGPRTTIKQNQLDVLNEMFSNTPKPSKHARAKLALETGLSMRVIQVWFQNRRSKERRLK).

In terms of assembly, interacts with unc-86; the heterooligomer binds to the promoters of mec-3, mec-4 and mec-7. In terms of tissue distribution, expressed in the mechanosensory neurons ALML, ALMR, PLML, PLMR, AVM and PVM, and the FLPL and FLPR neurons.

It is found in the nucleus. Functionally, transcription factor. Specifies differentiation of the set of six touch receptor neurons (TRNs). May positively modulate expression of both its own gene and also of homeobox ARX homolog alr-1 in TRNs, forming a positive feedback loop with alr-1, thereby restricting the variability of expression of mec-3. Required to determine the identity of ALM sensory neurons, acting by interacting with unc-86, thereby preventing unc-86 cooperating with pag-3 to induce BDU-neuron specific genes. Binds cooperatively as a heterodimer with unc-86 to sites in the mec-3 gene promoter. Promotes outgrowth of lateral dendritic branches on the PVD nociceptive neurons, probably acting both directly, and upstream of zinc finger protein egl-46. This is Mechanosensory protein 3 (mec-3) from Caenorhabditis elegans.